The chain runs to 514 residues: Coiled-coil domain-containing protein 174 (514 aa).

Disordered regions lie at residues 42-83 (AKPK…DQSR) and 137-162 (TLEKETDDEEIEPEMEIPPPEDPDEE). Positions 63 to 83 (KRAEKDIEQKAEEDQTLDQSR) are enriched in basic and acidic residues. Residues 66–98 (EKDIEQKAEEDQTLDQSRKKLEEKAKLYEKMTK) adopt a coiled-coil conformation. Residues 141 to 162 (ETDDEEIEPEMEIPPPEDPDEE) are compositionally biased toward acidic residues. Coiled coils occupy residues 203 to 227 (LLSEDMKRELQRQQWEKEEEEALRK) and 266 to 321 (LDML…LENG). Disordered stretches follow at residues 270 to 291 (REQTLDQRTKREQLKEKRKAAL) and 306 to 490 (LREE…PSAH). Composition is skewed to basic and acidic residues over residues 335–354 (EVPRPSRKVEVVIQERRDTK) and 376–388 (KKQEELRDERDPE). Residues 405–418 (YSSQNLNSPETSPG) are compositionally biased toward polar residues. Basic and acidic residues predominate over residues 420–429 (TEPEISENQK).

The protein localises to the nucleus. In terms of biological role, probably involved in neuronal development. The polypeptide is Coiled-coil domain-containing protein 174 (CCDC174) (Gallus gallus (Chicken)).